A 171-amino-acid polypeptide reads, in one-letter code: uncharacterized protein (171 aa).

Residues 123 to 171 are disordered; it reads CTKRDLRNDPPPAYQPDDPLKDLRKNFEKKEKPTWNDVEKKKNGVFEFH. Residues 140 to 171 show a composition bias toward basic and acidic residues; that stretch reads DPLKDLRKNFEKKEKPTWNDVEKKKNGVFEFH.

This is an uncharacterized protein from Caenorhabditis elegans.